The chain runs to 458 residues: MLKDPFQRLNLDREVLTVSQLNGRARLLLEDVFAQVWVEGEISNLARPASGHVYFTLKDRNAQVRCALFRQNAARVRQALRDGLAVRVRGKVSLFEGRGDYQLILDMLEPAGDGALRLAFEALKEKLAAEGLFSAERKAALPAHPRRIGIVSSPTGAVIRDIISVFRRRAPQVELTLIPTAVQGREATGQIVRALQLADAQGFDALILARGGGSLEDLWCFNEEAVARAVDACVTPIVCAVGHETDVSIADFVADVRAPTPSAAAELLAPSSADLQQRLNGLQQRLVLRMRDRLHRDAMRLDGLTRRLRHPGERLQQQAQRIDDLEQRLLRALDRRLCSGQERLARLETRLAAQHPGRTLNLLRQRLDHLSSRLPRAMQANIKGRRQQLQGLAQTLNVVSPLATLSRGYSILLDDRGQAIRSASQTQPGQRLKARLGDGELDVRVEDNHLQPVTLPLL.

It belongs to the XseA family. As to quaternary structure, heterooligomer composed of large and small subunits.

The protein localises to the cytoplasm. The catalysed reaction is Exonucleolytic cleavage in either 5'- to 3'- or 3'- to 5'-direction to yield nucleoside 5'-phosphates.. Its function is as follows. Bidirectionally degrades single-stranded DNA into large acid-insoluble oligonucleotides, which are then degraded further into small acid-soluble oligonucleotides. The polypeptide is Exodeoxyribonuclease 7 large subunit (Stutzerimonas stutzeri (strain A1501) (Pseudomonas stutzeri)).